The chain runs to 176 residues: CDP-archaeol synthase (176 aa).

The next 5 membrane-spanning stretches (helical) occupy residues 12-32, 60-80, 85-105, 118-138, and 141-161; these read FIYW…SPVL, GFYV…IILC, ILIG…GSFI, PIID…FLGI, and FISY…LHII.

This sequence belongs to the CDP-archaeol synthase family. It depends on Mg(2+) as a cofactor.

The protein localises to the cell membrane. It carries out the reaction 2,3-bis-O-(geranylgeranyl)-sn-glycerol 1-phosphate + CTP + H(+) = CDP-2,3-bis-O-(geranylgeranyl)-sn-glycerol + diphosphate. Its pathway is membrane lipid metabolism; glycerophospholipid metabolism. Its function is as follows. Catalyzes the formation of CDP-2,3-bis-(O-geranylgeranyl)-sn-glycerol (CDP-archaeol) from 2,3-bis-(O-geranylgeranyl)-sn-glycerol 1-phosphate (DGGGP) and CTP. This reaction is the third ether-bond-formation step in the biosynthesis of archaeal membrane lipids. In Staphylothermus marinus (strain ATCC 43588 / DSM 3639 / JCM 9404 / F1), this protein is CDP-archaeol synthase.